Here is a 251-residue protein sequence, read N- to C-terminus: Mediator of RNA polymerase II transcription subunit 7 (251 aa).

The disordered stretch occupies residues 1 to 38 (MLPGFGAQTVSPFPNPPEYASAYTSDRINNGSAPPPPH). Residues 22–32 (AYTSDRINNGS) are compositionally biased toward polar residues.

Belongs to the Mediator complex subunit 7 family. In terms of assembly, component of the Mediator complex. Interacts with mdt-10 and mdt-21. Interacts with RNA polymerase II.

It localises to the nucleus. Functionally, component of the Mediator complex, a coactivator involved in the regulated transcription of nearly all RNA polymerase II-dependent genes. Mediator functions as a bridge to convey information from gene-specific regulatory proteins to the basal RNA polymerase II transcription machinery. Mediator is recruited to promoters by direct interactions with regulatory proteins and serves as a scaffold for the assembly of a functional preinitiation complex with RNA polymerase II and the general transcription factors. Required for germ cell development and gonadal growth. The protein is Mediator of RNA polymerase II transcription subunit 7 (let-49) of Caenorhabditis elegans.